Here is a 689-residue protein sequence, read N- to C-terminus: Glycine--tRNA ligase beta subunit (689 aa).

It belongs to the class-II aminoacyl-tRNA synthetase family. In terms of assembly, tetramer of two alpha and two beta subunits.

The protein localises to the cytoplasm. It carries out the reaction tRNA(Gly) + glycine + ATP = glycyl-tRNA(Gly) + AMP + diphosphate. The protein is Glycine--tRNA ligase beta subunit of Salmonella typhi.